Reading from the N-terminus, the 73-residue chain is Antimicrobial peptide 143 (73 aa).

A signal peptide spans 1-22 (MKVKCLLAVFLIVLIAAEHCQA). Lysine amide is present on K38. Residues 44–73 (ELGTQFRPQQKNFMRREIDLERLFAEMPDY) constitute a propeptide that is removed on maturation.

This sequence belongs to the non-disulfide-bridged peptide (NDBP) superfamily. Short antimicrobial peptide (group 4) family. Expressed by the venom gland.

The protein resides in the secreted. Its subcellular location is the target cell membrane. In terms of biological role, cationic host defense peptide that have antibacterial activity by breaking membranes. Is more effective on Gram-positive than on Gram-negative bacteria. This chain is Antimicrobial peptide 143, found in Lychas mucronatus (Chinese swimming scorpion).